The primary structure comprises 291 residues: Undecaprenyl-diphosphatase 2 (291 aa).

6 helical membrane-spanning segments follow: residues 39–59 (PGAA…LIYF), 85–105 (ARMG…GLTL), 118–138 (ITAT…RMAA), 198–218 (AARY…VFEL), 231–251 (PTLF…AWFM), and 262–282 (FVWY…VGVL).

This sequence belongs to the UppP family.

It is found in the cell membrane. It catalyses the reaction di-trans,octa-cis-undecaprenyl diphosphate + H2O = di-trans,octa-cis-undecaprenyl phosphate + phosphate + H(+). Catalyzes the dephosphorylation of undecaprenyl diphosphate (UPP). Confers resistance to bacitracin. This is Undecaprenyl-diphosphatase 2 from Streptomyces coelicolor (strain ATCC BAA-471 / A3(2) / M145).